We begin with the raw amino-acid sequence, 138 residues long: Thioredoxin H2-1 (138 aa).

The tract at residues 1-20 (MGGAFSTSKPKPAAGEEGGE) is disordered. Residues 12–129 (PAAGEEGGES…LEKTINTLRS (118 aa)) form the Thioredoxin domain. Catalysis depends on nucleophile residues cysteine 55 and cysteine 58. A disulfide bridge links cysteine 55 with cysteine 58.

This sequence belongs to the thioredoxin family. Plant H-type subfamily.

The protein localises to the cytoplasm. Probable thiol-disulfide oxidoreductase that may be involved in the redox regulation of a number of cytosolic enzymes. This Oryza sativa subsp. japonica (Rice) protein is Thioredoxin H2-1.